The chain runs to 260 residues: UPF0294 protein plu0699 (260 aa).

The protein belongs to the UPF0294 family.

The protein localises to the cytoplasm. The chain is UPF0294 protein plu0699 from Photorhabdus laumondii subsp. laumondii (strain DSM 15139 / CIP 105565 / TT01) (Photorhabdus luminescens subsp. laumondii).